The chain runs to 173 residues: Mesencephalic astrocyte-derived neurotrophic factor homolog (173 aa).

The N-terminal stretch at 1-22 (MKTWYMVVVIGFLATLVQTSLA) is a signal peptide. 4 disulfide bridges follow: Cys-28–Cys-114, Cys-31–Cys-103, Cys-61–Cys-72, and Cys-148–Cys-151.

The protein belongs to the ARMET family.

It is found in the secreted. In terms of biological role, required during the maturation of the embryonic nervous system for maintenance of neuronal and cuticular connectivity. Essential for maintenance of dopaminergic neurons and dopamine levels. This Drosophila yakuba (Fruit fly) protein is Mesencephalic astrocyte-derived neurotrophic factor homolog.